The following is a 337-amino-acid chain: Tetraacyldisaccharide 4'-kinase (337 aa).

ATP is bound at residue 55 to 62; sequence TAGGNGKT.

It belongs to the LpxK family.

The catalysed reaction is a lipid A disaccharide + ATP = a lipid IVA + ADP + H(+). The protein operates within glycolipid biosynthesis; lipid IV(A) biosynthesis; lipid IV(A) from (3R)-3-hydroxytetradecanoyl-[acyl-carrier-protein] and UDP-N-acetyl-alpha-D-glucosamine: step 6/6. Its function is as follows. Transfers the gamma-phosphate of ATP to the 4'-position of a tetraacyldisaccharide 1-phosphate intermediate (termed DS-1-P) to form tetraacyldisaccharide 1,4'-bis-phosphate (lipid IVA). This Sodalis glossinidius (strain morsitans) protein is Tetraacyldisaccharide 4'-kinase.